A 329-amino-acid chain; its full sequence is Gut-specific cysteine proteinase (329 aa).

Positions 1-15 (MKFLILTALCAVTLA) are cleaved as a signal peptide. Residues 16–84 (FVPINHQSAV…ATEQEVVLAS (69 aa)) constitute a propeptide, activation peptide. 6 cysteine pairs are disulfide-bonded: Cys98–Cys127, Cys110–Cys155, Cys146–Cys204, Cys147–Cys151, Cys183–Cys208, and Cys191–Cys196. Cys113 is an active-site residue. Residues His275 and Asn295 contribute to the active site.

This sequence belongs to the peptidase C1 family. Larvae exhibit strong expression in gut cells and weak expression in hypodermal cells. Adults exhibit the reverse: strong expression in hypodermal cells and weaker expression in gut cells.

In terms of biological role, thiol protease. Has a role as a digestive enzyme. This chain is Gut-specific cysteine proteinase (cpr-1), found in Caenorhabditis elegans.